The following is a 971-amino-acid chain: Exportin-2 (971 aa).

An N-acetylmethionine modification is found at methionine 1. The Importin N-terminal domain occupies 29-102; that stretch reads AEKFLESVEG…KANIVHLMLS (74 aa). Serine 112 is subject to Phosphoserine. An N6-acetyllysine mark is found at lysine 574 and lysine 824. The residue at position 931 (serine 931) is a Phosphoserine.

It belongs to the XPO2/CSE1 family. As to quaternary structure, found in a complex with CSE1L/XPO2, Ran and KPNA2. Binds with high affinity to importin-alpha only in the presence of RanGTP. The complex is dissociated by the combined action of RanBP1 and RanGAP1. Interacts with CFTR. As to expression, ubiquitous. Detected in embryos from 5 to 17 dpc. Highly expressed in adult testis, heart, brain, lung, liver, skeletal muscle, spleen and kidney.

The protein resides in the cytoplasm. It localises to the nucleus. Export receptor for importin-alpha. Mediates importin-alpha re-export from the nucleus to the cytoplasm after import substrates (cargos) have been released into the nucleoplasm. In the nucleus binds cooperatively to importin-alpha and to the GTPase Ran in its active GTP-bound form. Docking of this trimeric complex to the nuclear pore complex (NPC) is mediated through binding to nucleoporins. Upon transit of a nuclear export complex into the cytoplasm, disassembling of the complex and hydrolysis of Ran-GTP to Ran-GDP (induced by RANBP1 and RANGAP1, respectively) cause release of the importin-alpha from the export receptor. CSE1L/XPO2 then return to the nuclear compartment and mediate another round of transport. The directionality of nuclear export is thought to be conferred by an asymmetric distribution of the GTP- and GDP-bound forms of Ran between the cytoplasm and nucleus. The polypeptide is Exportin-2 (Cse1l) (Mus musculus (Mouse)).